Reading from the N-terminus, the 303-residue chain is N-acetyl-D-glucosamine kinase (303 aa).

ATP-binding positions include 4–11 (GFDIGGTK) and 133–140 (GVGGGLIF). Zn(2+)-binding residues include His157, Cys177, Cys179, and Cys184.

Belongs to the ROK (NagC/XylR) family. NagK subfamily.

It catalyses the reaction N-acetyl-D-glucosamine + ATP = N-acetyl-D-glucosamine 6-phosphate + ADP + H(+). Its pathway is cell wall biogenesis; peptidoglycan recycling. Catalyzes the phosphorylation of N-acetyl-D-glucosamine (GlcNAc) derived from cell-wall degradation, yielding GlcNAc-6-P. The protein is N-acetyl-D-glucosamine kinase of Escherichia coli O6:H1 (strain CFT073 / ATCC 700928 / UPEC).